A 315-amino-acid polypeptide reads, in one-letter code: Prephenate dehydratase (315 aa).

Residues R3–R190 form the Prephenate dehydratase domain. In terms of domain architecture, ACT spans S204–P281.

Homodimer.

It carries out the reaction prephenate + H(+) = 3-phenylpyruvate + CO2 + H2O. It functions in the pathway amino-acid biosynthesis; L-phenylalanine biosynthesis; phenylpyruvate from prephenate: step 1/1. The chain is Prephenate dehydratase (pheA) from Mycobacterium sp. (strain KMS).